Here is a 276-residue protein sequence, read N- to C-terminus: Large ribosomal subunit protein uL2 (276 aa).

A disordered region spans residues 212 to 276 (NRHRGIRPQT…KLIISRKKHK (65 aa)). Residues 257-276 (YKTRKKKASDKLIISRKKHK) are compositionally biased toward basic residues.

It belongs to the universal ribosomal protein uL2 family. As to quaternary structure, part of the 50S ribosomal subunit. Forms a bridge to the 30S subunit in the 70S ribosome.

Functionally, one of the primary rRNA binding proteins. Required for association of the 30S and 50S subunits to form the 70S ribosome, for tRNA binding and peptide bond formation. It has been suggested to have peptidyltransferase activity; this is somewhat controversial. Makes several contacts with the 16S rRNA in the 70S ribosome. In Helicobacter pylori (strain HPAG1), this protein is Large ribosomal subunit protein uL2.